The primary structure comprises 434 residues: Gamma-enolase (434 aa).

Position 2 is an N-acetylserine (Ser2). An N6-acetyllysine modification is found at Lys5. Residue Thr26 is modified to Phosphothreonine. Ser40 contributes to the Mg(2+) binding site. The residue at position 44 (Tyr44) is a Phosphotyrosine. Residue Lys60 is modified to N6-acetyllysine; alternate. Residue Lys60 is modified to N6-succinyllysine; alternate. Lys64 is modified (N6-acetyllysine). The residue at position 89 (Lys89) is an N6-acetyllysine; alternate. At Lys89 the chain carries N6-succinyllysine; alternate. Positions 158 and 167 each coordinate substrate. 3 positions are modified to N6-acetyllysine: Lys193, Lys197, and Lys199. Lys202 is modified (N6-acetyllysine; alternate). Lys202 is covalently cross-linked (Glycyl lysine isopeptide (Lys-Gly) (interchain with G-Cter in SUMO2); alternate). The Proton donor role is filled by Glu210. N6-acetyllysine; alternate occurs at positions 228 and 233. Residue Lys228 is modified to N6-succinyllysine; alternate. Position 233 is an N6-(2-hydroxyisobutyryl)lysine; alternate (Lys233). Residue Asp245 participates in Mg(2+) binding. At Lys256 the chain carries N6-acetyllysine. Ser263 is modified (phosphoserine). Residue Tyr287 is modified to Phosphotyrosine. The residue at position 291 (Ser291) is a Phosphoserine. Mg(2+)-binding residues include Glu293 and Asp318. Positions 293 and 318 each coordinate substrate. Lys335 and Lys343 each carry N6-acetyllysine. Residue Lys343 is the Proton acceptor of the active site. Residues Ser370 to Ser373 and Lys394 each bind substrate. Residue Lys406 is modified to N6-acetyllysine.

Belongs to the enolase family. In terms of assembly, mammalian enolase is composed of 3 isozyme subunits, alpha, beta and gamma, which can form homodimers or heterodimers which are cell-type and development-specific. Mg(2+) serves as cofactor. The alpha/alpha homodimer is expressed in embryo and in most adult tissues. The alpha/beta heterodimer and the beta/beta homodimer are found in striated muscle, and the alpha/gamma heterodimer and the gamma/gamma homodimer in neurons.

The protein localises to the cytoplasm. It localises to the cell membrane. It catalyses the reaction (2R)-2-phosphoglycerate = phosphoenolpyruvate + H2O. It functions in the pathway carbohydrate degradation; glycolysis; pyruvate from D-glyceraldehyde 3-phosphate: step 4/5. Has neurotrophic and neuroprotective properties on a broad spectrum of central nervous system (CNS) neurons. Binds, in a calcium-dependent manner, to cultured neocortical neurons and promotes cell survival. The protein is Gamma-enolase (ENO2) of Homo sapiens (Human).